The following is a 695-amino-acid chain: NADPH--cytochrome P450 reductase (695 aa).

The Lumenal portion of the chain corresponds to 1–8 (MAQLDTLD). The helical transmembrane segment at 9–31 (LVVLVVLLVGSAAYFTKGTYWAV) threads the bilayer. Topologically, residues 32–695 (PKDPYAASGP…SGSYQEDVWS (664 aa)) are cytoplasmic. The 156-residue stretch at 66–221 (CVIFYGSQTG…DFLAWKEPMW (156 aa)) folds into the Flavodoxin-like domain. FMN is bound by residues 72–77 (SQTGTA), 123–126 (ATYG), 169–178 (LGNNTYEHYQ), and Asp-204. The 262-residue stretch at 277 to 538 (HNPFIAPIVE…HVRHSNFKLP (262 aa)) folds into the FAD-binding FR-type domain. Arg-296 contributes to the NADP(+) binding site. FAD contacts are provided by residues 451–454 (RYYS), 469–471 (TAV), and 486–489 (GVTT). NADP(+) is bound by residues Thr-552, 614–615 (SR), 620–624 (KVYVQ), and Glu-656. Residue Trp-694 participates in FAD binding.

Belongs to the NADPH--cytochrome P450 reductase family. It in the N-terminal section; belongs to the flavodoxin family. This sequence in the C-terminal section; belongs to the flavoprotein pyridine nucleotide cytochrome reductase family. FAD is required as a cofactor. FMN serves as cofactor.

The protein resides in the endoplasmic reticulum membrane. It is found in the mitochondrion outer membrane. The protein localises to the cell membrane. The enzyme catalyses 2 oxidized [cytochrome P450] + NADPH = 2 reduced [cytochrome P450] + NADP(+) + H(+). In terms of biological role, this enzyme is required for electron transfer from NADP to cytochrome P450 in microsomes. It can also provide electron transfer to heme oxygenase and cytochrome B5. Involved in ergosterol biosynthesis. The polypeptide is NADPH--cytochrome P450 reductase (Aspergillus terreus (strain NIH 2624 / FGSC A1156)).